The sequence spans 54 residues: Ovomucoid (54 aa).

In terms of domain architecture, Kazal-like spans 4 to 54 (VDCSDYPRPVCTLDYMPLCGSDNKTYSNKCNFCNAVVDSNGTITLSHFGRC). Cystine bridges form between C6/C36, C14/C33, and C22/C54. Residue N43 is glycosylated (N-linked (GlcNAc...) asparagine).

Its subcellular location is the secreted. In Corvus albus (Pied crow), this protein is Ovomucoid.